Consider the following 20-residue polypeptide: Isocitrate dehydrogenase [NADP] (20 aa).

It belongs to the isocitrate and isopropylmalate dehydrogenases family. The cofactor is Mn(2+). Mg(2+) serves as cofactor.

It is found in the cytoplasm. The catalysed reaction is D-threo-isocitrate + NADP(+) = 2-oxoglutarate + CO2 + NADPH. The polypeptide is Isocitrate dehydrogenase [NADP] (Naegleria fowleri (Brain eating amoeba)).